Reading from the N-terminus, the 454-residue chain is Cysteine--tRNA ligase (454 aa).

Cysteine 27 contacts Zn(2+). Residues 29 to 39 (PTVQDHFHIGH) carry the 'HIGH' region motif. Zn(2+)-binding residues include aspartate 207, histidine 232, and glutamate 236. The 'KMSKS' region signature appears at 265–269 (KMSKS). Residue lysine 268 coordinates ATP.

This sequence belongs to the class-I aminoacyl-tRNA synthetase family. The cofactor is Zn(2+).

The protein resides in the cytoplasm. The catalysed reaction is tRNA(Cys) + L-cysteine + ATP = L-cysteinyl-tRNA(Cys) + AMP + diphosphate. This is Cysteine--tRNA ligase from Thermoplasma volcanium (strain ATCC 51530 / DSM 4299 / JCM 9571 / NBRC 15438 / GSS1).